Here is a 513-residue protein sequence, read N- to C-terminus: ATP synthase subunit alpha (513 aa).

Residue 169 to 176 (GDRQTGKT) coordinates ATP.

This sequence belongs to the ATPase alpha/beta chains family. As to quaternary structure, F-type ATPases have 2 components, CF(1) - the catalytic core - and CF(0) - the membrane proton channel. CF(1) has five subunits: alpha(3), beta(3), gamma(1), delta(1), epsilon(1). CF(0) has three main subunits: a(1), b(2) and c(9-12). The alpha and beta chains form an alternating ring which encloses part of the gamma chain. CF(1) is attached to CF(0) by a central stalk formed by the gamma and epsilon chains, while a peripheral stalk is formed by the delta and b chains.

Its subcellular location is the cell inner membrane. It carries out the reaction ATP + H2O + 4 H(+)(in) = ADP + phosphate + 5 H(+)(out). Produces ATP from ADP in the presence of a proton gradient across the membrane. The alpha chain is a regulatory subunit. The sequence is that of ATP synthase subunit alpha from Hydrogenovibrio crunogenus (strain DSM 25203 / XCL-2) (Thiomicrospira crunogena).